We begin with the raw amino-acid sequence, 95 residues long: uncharacterized protein (95 aa).

Residues 12 to 32 form a helical membrane-spanning segment; it reads IASLVVSVVVLLIGLILWFFI.

It is found in the cell membrane. This is an uncharacterized protein from Escherichia coli O6:H1 (strain CFT073 / ATCC 700928 / UPEC).